The following is a 219-amino-acid chain: 2-phospho-L-lactate guanylyltransferase (219 aa).

Belongs to the CofC family. In terms of assembly, homodimer.

It catalyses the reaction (2S)-2-phospholactate + GTP + H(+) = (2S)-lactyl-2-diphospho-5'-guanosine + diphosphate. It participates in cofactor biosynthesis; coenzyme F420 biosynthesis. Its function is as follows. Guanylyltransferase that catalyzes the activation of (2S)-2-phospholactate (2-PL) as (2S)-lactyl-2-diphospho-5'-guanosine, via the condensation of 2-PL with GTP. It is involved in the biosynthesis of coenzyme F420, a hydride carrier cofactor. This is 2-phospho-L-lactate guanylyltransferase from Methanocaldococcus vulcanius (strain ATCC 700851 / DSM 12094 / M7) (Methanococcus vulcanius).